Here is a 497-residue protein sequence, read N- to C-terminus: Amino acid oxidase fsqB (497 aa).

FAD-binding residues include V14, F15, D38, N53, A57, N58, R63, V64, and V211. Residue C414 is modified to S-8alpha-FAD cysteine. FAD-binding residues include F447 and K448.

It belongs to the MSOX/MTOX family. Dimer. FAD is required as a cofactor.

It carries out the reaction (2S,4S,5S)-2-amino-6-(3,4-dihydroxyphenyl)-4-hydroxy-5-(methylamino)hexanoyl-[peptidyl-carrier protein] + O2 = (2S,4S)-2-amino-4-[(3S)-7,8-dihydroxy-1,2,3,4-tetrahydroisoquinolin-3-yl]-4-hydroxybutanoyl-[peptidyl-carrier protein] + H2O2. It catalyses the reaction N-methyl-L-dopa + O2 = (3S)-7,8-dihydroxy-1,2,3,4-tetrahydroisoquinoline-3-carboxylate + H2O2. The catalysed reaction is N-methyl-D-dopa + O2 = (3R)-7,8-dihydroxy-1,2,3,4-tetrahydroisoquinoline-3-carboxylate + H2O2. It participates in secondary metabolite biosynthesis. Its function is as follows. Amino acid oxidase; part of the gene cluster that mediates the biosynthesis of the isoquinoline alkaloids fumisoquin A, fumisoquin B and fumisoquin C; as well as small amounts of fumipyrrole as a shunt metabolite. The products of the cluster lead to a brown coloration and are important for growth and conidiation. The nonribosomal peptide synthetase-like protein fsqF, which lacks a canonical condensation domain, is required for addition of a serine-derived dehydroalanine moiety to activated tyrosine but is not essential for the subsequent steps leading to isoquinoline formation. A different enzyme, most likely the ATP-grasp enzyme fsqD, is responsible for activation of tyrosine. Three additional enzymes encoded by the fsq cluster, the N-methyltransferase fsqC, the phenol 2-monooxygenase fsqG and the FAD-dependent oxidase fsqB, catalyze the formation of the isoquinoline ring system in the fumisoquins. FsqB converts the fspF thiolation domain-bound (2S,4S,5S)-2-amino-6-(3,4-dihydroxyphenyl)-4-hydroxy-5-(methylamino)hexanoyl into isoquinoline. The cyclization most likely proceeds via a two-step mechanism, beginning with FAD-dependent oxidation of the methyl group to an iminium species followed by electrophilic attack on the deprotonated phenol. In terms of biological role, is able to convert N-methyl-3,4-dihydroxy-DL-phenylalanine (N-methyl-DOPA) directly into cyclic isoquinoline, in vitro. The absence of the meta-hydroxyl group, as in L-N-methyl-tyrosine, leads to a 25-fold lower rate of reduction and the formation of the demethylated product L-tyrosine, instead of a cyclic product. Does not accept the D-stereoisomer of N-methyltyrosine, in contrast to N-methyl-DOPA, for which both stereoisomers are oxidized with similar rates. The protein is Amino acid oxidase fsqB of Aspergillus fumigatus (strain ATCC MYA-4609 / CBS 101355 / FGSC A1100 / Af293) (Neosartorya fumigata).